A 539-amino-acid chain; its full sequence is T-complex protein 1 subunit zeta (539 aa).

Belongs to the TCP-1 chaperonin family. Heterooligomeric complex of about 850 to 900 kDa that forms two stacked rings, 12 to 16 nm in diameter.

The protein localises to the cytoplasm. Molecular chaperone; assists the folding of proteins upon ATP hydrolysis. Known to play a role, in vitro, in the folding of actin and tubulin. This Dictyostelium discoideum (Social amoeba) protein is T-complex protein 1 subunit zeta (cct6).